We begin with the raw amino-acid sequence, 460 residues long: MGKEKGHINVVVIGHVDSGKSTTTGHLIYKCGGIDKRTIEKFEKEATELGKGSFKYAWVLDKLKAERERGITIDIALWKFETPKYNVTVIDAPGHRDFIKNMITGTSQADCAVLIIGGGTGEFEAGISKDGQTREHALLAYTLGVKQLIVAVNKMDTTGWSQARFEEIVKETSNFIKKVGFNPKTVPFVPVSGFQGDNMIEPTTNMPWYQGWQKETKAGVVKGKTLLEAIDSIEPPARPTDKPLRLPLQDVYKIGGIGTVPVGRVETGVIKPGMIVTFAPAGVTTEVKSVEMHHESLDAGLPGDNVGFNVKNVSVKDIRRGNVCGDSKNDPPMGCASFTAQVIILNHPGQISAGYSPVLDCHTAHIACKFAELIEKIDRRSGKKIEESPKFVKSGDACIAKMVPSKPMCVEAFTDYAPLGRFAVRDMRQTVAVGVIKAVEKVAPGAAKVTKAAVKAGAKK.

At Gly-2 the chain carries N,N,N-trimethylglycine. Lys-3 is modified (N6,N6-dimethyllysine; alternate). An N6-methyllysine; alternate modification is found at Lys-3. The region spanning 5–240 (KGHINVVVIG…DSIEPPARPT (236 aa)) is the tr-type G domain. A G1 region spans residues 14–21 (GHVDSGKS). 14-21 (GHVDSGKS) provides a ligand contact to GTP. Lys-30 is modified (N6-methyllysine). The tract at residues 70 to 74 (GITID) is G2. Lys-79 is subject to N6,N6,N6-trimethyllysine. The tract at residues 91–94 (DAPG) is G3. GTP-binding positions include 91–95 (DAPGH) and 153–156 (NKMD). Positions 153 to 156 (NKMD) are G4. The interval 192–194 (SGF) is G5. Position 316 is an N6,N6-dimethyllysine; alternate (Lys-316). Residue Lys-316 is modified to N6-methyllysine; alternate. N6-methyllysine is present on Lys-390.

The protein belongs to the TRAFAC class translation factor GTPase superfamily. Classic translation factor GTPase family. EF-Tu/EF-1A subfamily.

The protein resides in the cytoplasm. Its function is as follows. This protein promotes the GTP-dependent binding of aminoacyl-tRNA to the A-site of ribosomes during protein biosynthesis. The sequence is that of Elongation factor 1-alpha-A (tef101) from Schizosaccharomyces pombe (strain 972 / ATCC 24843) (Fission yeast).